The following is a 393-amino-acid chain: Chorismate synthase (393 aa).

Residues R40 and R46 each contribute to the NADP(+) site. Residues 129 to 131 (RSS), 249 to 250 (QA), G301, 316 to 320 (KPIPT), and R342 contribute to the FMN site.

Belongs to the chorismate synthase family. As to quaternary structure, homotetramer. The cofactor is FMNH2.

It carries out the reaction 5-O-(1-carboxyvinyl)-3-phosphoshikimate = chorismate + phosphate. Its pathway is metabolic intermediate biosynthesis; chorismate biosynthesis; chorismate from D-erythrose 4-phosphate and phosphoenolpyruvate: step 7/7. Functionally, catalyzes the anti-1,4-elimination of the C-3 phosphate and the C-6 proR hydrogen from 5-enolpyruvylshikimate-3-phosphate (EPSP) to yield chorismate, which is the branch point compound that serves as the starting substrate for the three terminal pathways of aromatic amino acid biosynthesis. This reaction introduces a second double bond into the aromatic ring system. This chain is Chorismate synthase, found in Geotalea uraniireducens (strain Rf4) (Geobacter uraniireducens).